The primary structure comprises 326 residues: 4-hydroxy-3-methylbut-2-enyl diphosphate reductase (326 aa).

C22 contributes to the [4Fe-4S] cluster binding site. (2E)-4-hydroxy-3-methylbut-2-enyl diphosphate-binding residues include H51 and H84. Residues H51 and H84 each contribute to the dimethylallyl diphosphate site. Isopentenyl diphosphate is bound by residues H51 and H84. C106 contributes to the [4Fe-4S] cluster binding site. Position 134 (H134) interacts with (2E)-4-hydroxy-3-methylbut-2-enyl diphosphate. A dimethylallyl diphosphate-binding site is contributed by H134. H134 contacts isopentenyl diphosphate. E136 (proton donor) is an active-site residue. T174 serves as a coordination point for (2E)-4-hydroxy-3-methylbut-2-enyl diphosphate. C204 serves as a coordination point for [4Fe-4S] cluster. S232, S233, N234, and S276 together coordinate (2E)-4-hydroxy-3-methylbut-2-enyl diphosphate. Residues S232, S233, N234, and S276 each contribute to the dimethylallyl diphosphate site. 4 residues coordinate isopentenyl diphosphate: S232, S233, N234, and S276.

This sequence belongs to the IspH family. [4Fe-4S] cluster is required as a cofactor.

It carries out the reaction isopentenyl diphosphate + 2 oxidized [2Fe-2S]-[ferredoxin] + H2O = (2E)-4-hydroxy-3-methylbut-2-enyl diphosphate + 2 reduced [2Fe-2S]-[ferredoxin] + 2 H(+). The enzyme catalyses dimethylallyl diphosphate + 2 oxidized [2Fe-2S]-[ferredoxin] + H2O = (2E)-4-hydroxy-3-methylbut-2-enyl diphosphate + 2 reduced [2Fe-2S]-[ferredoxin] + 2 H(+). It participates in isoprenoid biosynthesis; dimethylallyl diphosphate biosynthesis; dimethylallyl diphosphate from (2E)-4-hydroxy-3-methylbutenyl diphosphate: step 1/1. Its pathway is isoprenoid biosynthesis; isopentenyl diphosphate biosynthesis via DXP pathway; isopentenyl diphosphate from 1-deoxy-D-xylulose 5-phosphate: step 6/6. Catalyzes the conversion of 1-hydroxy-2-methyl-2-(E)-butenyl 4-diphosphate (HMBPP) into a mixture of isopentenyl diphosphate (IPP) and dimethylallyl diphosphate (DMAPP). Acts in the terminal step of the DOXP/MEP pathway for isoprenoid precursor biosynthesis. In Bordetella parapertussis (strain 12822 / ATCC BAA-587 / NCTC 13253), this protein is 4-hydroxy-3-methylbut-2-enyl diphosphate reductase.